The primary structure comprises 281 residues: Ribosomal RNA small subunit methyltransferase J (281 aa).

S-adenosyl-L-methionine-binding positions include 129-130, 145-146, and aspartate 199; these read RD and ER.

This sequence belongs to the methyltransferase superfamily. RsmJ family.

Its subcellular location is the cytoplasm. It carries out the reaction guanosine(1516) in 16S rRNA + S-adenosyl-L-methionine = N(2)-methylguanosine(1516) in 16S rRNA + S-adenosyl-L-homocysteine + H(+). Specifically methylates the guanosine in position 1516 of 16S rRNA. This is Ribosomal RNA small subunit methyltransferase J from Laribacter hongkongensis (strain HLHK9).